A 317-amino-acid chain; its full sequence is Malate dehydrogenase (317 aa).

NAD(+)-binding positions include 10-15 (GGGQIG) and Asp-34. Arg-83 and Arg-89 together coordinate substrate. Residues Asn-96 and 119–121 (ISN) each bind NAD(+). Positions 121 and 152 each coordinate substrate. Residue His-176 is the Proton acceptor of the active site.

The protein belongs to the LDH/MDH superfamily. MDH type 3 family.

It catalyses the reaction (S)-malate + NAD(+) = oxaloacetate + NADH + H(+). Catalyzes the reversible oxidation of malate to oxaloacetate. This is Malate dehydrogenase from Geobacter metallireducens (strain ATCC 53774 / DSM 7210 / GS-15).